A 469-amino-acid chain; its full sequence is 3-isopropylmalate dehydratase large subunit (469 aa).

[4Fe-4S] cluster contacts are provided by Cys-350, Cys-410, and Cys-413.

The protein belongs to the aconitase/IPM isomerase family. LeuC type 1 subfamily. As to quaternary structure, heterodimer of LeuC and LeuD. Requires [4Fe-4S] cluster as cofactor.

The enzyme catalyses (2R,3S)-3-isopropylmalate = (2S)-2-isopropylmalate. Its pathway is amino-acid biosynthesis; L-leucine biosynthesis; L-leucine from 3-methyl-2-oxobutanoate: step 2/4. Catalyzes the isomerization between 2-isopropylmalate and 3-isopropylmalate, via the formation of 2-isopropylmaleate. The polypeptide is 3-isopropylmalate dehydratase large subunit (Chelativorans sp. (strain BNC1)).